Here is a 284-residue protein sequence, read N- to C-terminus: uncharacterized protein (284 aa).

Residues 1–20 (MLHNIQSILQFLLFVSSVQA) form the signal peptide. Positions 38–121 (CFEFKKNYWI…FTVNFFRNIC (84 aa)) constitute an Apple domain. Disulfide bonds link C38-C121, C63-C89, and C67-C77. N-linked (GlcNAc...) asparagine glycosylation occurs at N256. The helical transmembrane segment at 264–284 (SSTGLKFTTGLLIILVVFLFL) threads the bilayer.

Its subcellular location is the membrane. This is an uncharacterized protein from Caenorhabditis elegans.